Consider the following 91-residue polypeptide: MSDGGQGVTRNTRKVREGYVVSDKMDKTIVVSLEDRKKHALYGKVMRRNTKVKAHDEANTAGVGDRVLLMETRPLSASKRWRLVEVVEKAK.

The protein belongs to the universal ribosomal protein uS17 family. As to quaternary structure, part of the 30S ribosomal subunit.

One of the primary rRNA binding proteins, it binds specifically to the 5'-end of 16S ribosomal RNA. In Saccharopolyspora erythraea (strain ATCC 11635 / DSM 40517 / JCM 4748 / NBRC 13426 / NCIMB 8594 / NRRL 2338), this protein is Small ribosomal subunit protein uS17.